Reading from the N-terminus, the 737-residue chain is NAD(P)H-quinone oxidoreductase subunit 5, chloroplastic (737 aa).

Helical transmembrane passes span 9–29 (WIIPFIPLPVPMLIGAGLILF), 40–60 (WAFQSVLLLSIVMIFSIYLSI), 89–109 (IDPLTSIMSILITTVGIMVLI), 125–145 (FAYMSFFSTSMLGLVTSSNLI), 147–167 (IYIFWELVGLCSYLLIGFWFT), 185–205 (GDFGLLLGILGFYWITGSFEF), 219–239 (NELNFLFVTLCAVLLFAGAVA), 258–278 (TPISALIHAATMVAAGIFLVA), 286–306 (VIPYIMYLISVIGIITVLLGA), 327–347 (LGYMMLALGMGSYRSALFHLI), 354–374 (ALLFLGSGSIIHSMETIVGYS), 396–416 (ITFLLGTLSLCGIPPLACFWS), 425–445 (WLYSPIFAIIAWATAGLTAFY), 543–563 (LFPIFVLGLFTLFVGAIGIPF), 602–622 (VVSVSIAYFGIFIASFLYKPI), and 717–737 (SYLFLYLAYVSVFLLVYYLLF).

This sequence belongs to the complex I subunit 5 family. As to quaternary structure, NDH is composed of at least 16 different subunits, 5 of which are encoded in the nucleus.

The protein localises to the plastid. It is found in the chloroplast thylakoid membrane. The enzyme catalyses a plastoquinone + NADH + (n+1) H(+)(in) = a plastoquinol + NAD(+) + n H(+)(out). The catalysed reaction is a plastoquinone + NADPH + (n+1) H(+)(in) = a plastoquinol + NADP(+) + n H(+)(out). Functionally, NDH shuttles electrons from NAD(P)H:plastoquinone, via FMN and iron-sulfur (Fe-S) centers, to quinones in the photosynthetic chain and possibly in a chloroplast respiratory chain. The immediate electron acceptor for the enzyme in this species is believed to be plastoquinone. Couples the redox reaction to proton translocation, and thus conserves the redox energy in a proton gradient. The sequence is that of NAD(P)H-quinone oxidoreductase subunit 5, chloroplastic (ndhF) from Solanum lycopersicum (Tomato).